We begin with the raw amino-acid sequence, 808 residues long: Ribosome biogenesis protein BOP1 homolog (808 aa).

The tract at residues 1–56 is disordered; it reads MTSPKGKPSPKRSAPAPTTAALTPRTEERTEGATSSASASASSHISSSFDSPRDDT. Low complexity-rich tracts occupy residues 12-24 and 33-50; these read RSAPAPTTAALTP and ATSSASASASSHISSSFD. WD repeat units follow at residues 430 to 469, 640 to 680, 682 to 720, 724 to 766, and 777 to 808; these read GHTATVRSVSVSPNGQYLATGCDDHLVRVFEVQTGRLMKR, KFSE…RRFK, SGGVTTCLSIHPEGDNFLVGDTTSHTSWFDMDFSDKPYK, SHRG…DYNK, and KHQRPVYAVAWHPTLAWLFTSTEDGVVTAWTE.

Belongs to the WD repeat BOP1/ERB1 family.

It is found in the nucleus. Its subcellular location is the nucleolus. The protein localises to the nucleoplasm. In terms of biological role, required for maturation of ribosomal RNAs and formation of the large ribosomal subunit. In Leishmania infantum, this protein is Ribosome biogenesis protein BOP1 homolog.